The sequence spans 925 residues: Isoleucine--tRNA ligase (925 aa).

A 'HIGH' region motif is present at residues 57–67 (PYANGDIHMGH). Glu-556 provides a ligand contact to L-isoleucyl-5'-AMP. The 'KMSKS' region motif lies at 597–601 (KMSKS). Lys-600 contacts ATP. 4 residues coordinate Zn(2+): Cys-890, Cys-893, Cys-910, and Cys-913.

Belongs to the class-I aminoacyl-tRNA synthetase family. IleS type 1 subfamily. In terms of assembly, monomer. Zn(2+) serves as cofactor.

Its subcellular location is the cytoplasm. It catalyses the reaction tRNA(Ile) + L-isoleucine + ATP = L-isoleucyl-tRNA(Ile) + AMP + diphosphate. Its function is as follows. Catalyzes the attachment of isoleucine to tRNA(Ile). As IleRS can inadvertently accommodate and process structurally similar amino acids such as valine, to avoid such errors it has two additional distinct tRNA(Ile)-dependent editing activities. One activity is designated as 'pretransfer' editing and involves the hydrolysis of activated Val-AMP. The other activity is designated 'posttransfer' editing and involves deacylation of mischarged Val-tRNA(Ile). The polypeptide is Isoleucine--tRNA ligase (Carboxydothermus hydrogenoformans (strain ATCC BAA-161 / DSM 6008 / Z-2901)).